The chain runs to 732 residues: Conidiogenone synthase (732 aa).

A terpene cyclase region spans residues 1-311 (MADKITDEYA…SLCVPRYCKV (311 aa)). Residue aspartate 97 coordinates Mg(2+). Substrate is bound by residues aspartate 97, 169 to 172 (RIVD), asparagine 213, 217 to 221 (SWDKE), and 307 to 308 (RY). A DDXXD 1 motif is present at residues 97 to 101 (DALNQ). The NSE/DTE motif lies at 213–221 (NDLFSWDKE). The segment at 312-732 (DRNPYKDHLE…LRAMEETLQK (421 aa)) is prenyltransferase. The interval 348–370 (KQSELKDPSSSTYKSHFSPLEPN) is disordered. Residues lysine 402, arginine 405, and histidine 434 each coordinate isopentenyl diphosphate. Mg(2+)-binding residues include aspartate 441 and aspartate 445. The short motif at 441 to 445 (DDIQD) is the DDXXD 2 element. Arginine 450 is a binding site for dimethylallyl diphosphate. Isopentenyl diphosphate is bound at residue arginine 451. The dimethylallyl diphosphate site is built by lysine 529, threonine 530, glutamine 565, asparagine 572, lysine 582, and lysine 592.

In the N-terminal section; belongs to the terpene synthase family. It in the C-terminal section; belongs to the FPP/GGPP synthase family. In terms of assembly, hexamer. Mg(2+) is required as a cofactor.

The catalysed reaction is isopentenyl diphosphate + (2E,6E)-farnesyl diphosphate = (2E,6E,10E)-geranylgeranyl diphosphate + diphosphate. The protein operates within secondary metabolite biosynthesis; terpenoid biosynthesis. Its function is as follows. Bifunctional terpene synthase; part of the gene cluster that mediates the biosynthesis of conidiogenone, a diterpene known to induce the conidiation. The bifunctional terpene synthase PchDS converts isopentenyl diphosphate (IPP) and dimethylallyl diphosphate (DMAPP) into deoxyconidiogenol. The C-terminal prenyltransferase (PT) domain of PchDS catalyzes formation of GGPP, whereas the N-terminal terpene cyclase (TC) domain catalyzes the cyclization of GGPP into deoxyconidiogenol. The cytochrome P450 monooxygenase PchP450 then catalyzes two rounds of oxidation to furnish conidiogenone. In Penicillium rubens (strain ATCC 28089 / DSM 1075 / NRRL 1951 / Wisconsin 54-1255) (Penicillium chrysogenum), this protein is Conidiogenone synthase.